A 182-amino-acid chain; its full sequence is Inner membrane-spanning protein YciB (182 aa).

The next 5 membrane-spanning stretches (helical) occupy residues G20–Y42, L55–L75, L76–F96, L123–F143, and F153–M173.

The protein belongs to the YciB family.

It is found in the cell inner membrane. Plays a role in cell envelope biogenesis, maintenance of cell envelope integrity and membrane homeostasis. The sequence is that of Inner membrane-spanning protein YciB from Polynucleobacter asymbioticus (strain DSM 18221 / CIP 109841 / QLW-P1DMWA-1) (Polynucleobacter necessarius subsp. asymbioticus).